The chain runs to 473 residues: Probable DNA N(6)-methyladenine demethylase ALKBH1B (473 aa).

357–359 (NFY) lines the 2-oxoglutarate pocket. 3 residues coordinate Fe cation: H368, D391, and H449. Residue 461–465 (RLFFR) participates in 2-oxoglutarate binding.

This sequence belongs to the alkB family. It depends on Fe(2+) as a cofactor. As to expression, undetectable.

It carries out the reaction an N(6)-methyl-2'-deoxyadenosine in DNA + 2-oxoglutarate + O2 = a 2'-deoxyadenosine in DNA + formaldehyde + succinate + CO2. Its function is as follows. Dioxygenase that may catalyzes DNA N(6)-methyladenine (6 mA) demethylation. Requires molecular oxygen, alpha-ketoglutarate and iron. The polypeptide is Probable DNA N(6)-methyladenine demethylase ALKBH1B (Arabidopsis thaliana (Mouse-ear cress)).